The sequence spans 100 residues: Large ribosomal subunit protein uL23 (100 aa).

The protein belongs to the universal ribosomal protein uL23 family. Part of the 50S ribosomal subunit. Contacts protein L29, and trigger factor when it is bound to the ribosome.

One of the early assembly proteins it binds 23S rRNA. One of the proteins that surrounds the polypeptide exit tunnel on the outside of the ribosome. Forms the main docking site for trigger factor binding to the ribosome. The protein is Large ribosomal subunit protein uL23 of Baumannia cicadellinicola subsp. Homalodisca coagulata.